The chain runs to 338 residues: Clavatol oxidase claD (338 aa).

Positions 193–299 (DPMSLLRLLH…RYSVVFFYDG (107 aa)) constitute a Fe2OG dioxygenase domain. Fe cation-binding residues include His222, Asp224, and His280. Residue Arg290 participates in 2-oxoglutarate binding.

Belongs to the iron/ascorbate-dependent oxidoreductase family. It depends on Fe(2+) as a cofactor.

The enzyme catalyses clavatol + 2-oxoglutarate + O2 = hydroxyclavatol + succinate + CO2. Its pathway is secondary metabolite biosynthesis. Functionally, 2-oxoglutarate-dependent dioxygenase; part of the cla gene cluster that produces clavatol and ortho-quinone methide. The clavatol biosynthesis cluster cla and the terrestric acid cluster tra are both involved in the production of peniphenones and penilactones. The non-reducing PKS claF is responsible for the formation of clavatol from successive condensations of 3 malonyl-CoA units, presumably with a simple acetyl-CoA starter unit, and 2 methylation steps. The esterase claE probably collaborates with claF by catalyzing the hydrolysis of ACP-bound acyl intermediates to free the ACP from stalled intermediates. The clavatol oxidase claD then converts clavatol to hydroxyclavatol. Spontaneous dehydration of hydroxyclavatol leads to the accumulation of the highly active ortho-quinone methide. On the other hand, the PKS-NRPS hybrid traA is involved in the formation of crustosic acid, with the help of traB and traD. The polyketide synthase module (PKS) of traA is responsible for the synthesis of the polyketide backbone via the condensation of an acetyl-CoA starter unit with 3 malonyl-CoA units. The downstream nonribosomal peptide synthetase (NRPS) module then amidates the carboxyl end of the polyketide with L-malic acid. Because traA lacks a designated enoylreductase (ER) domain, the required activity is provided the enoyl reductase traG. Crustosic acid undergoes decarboxylation and isomerization to the terrestric acid, catalyzed by the 2-oxoglutarate-dependent dioxygenase traH. Both acids are further converted to the 2 gamma-butyrolactones (R)-5-methyltetronic acid and (S)-5-carboxylmethyltetronic acid, with involvement of the cytochrome P450 monooxygenase claJ. Spontaneous addition of the methide to these gamma-butyrolactones leads to peniphenone D and penilactone D, which undergo again stereospecific attacking by methide to give penilactones A and B. The polypeptide is Clavatol oxidase claD (Penicillium crustosum (Blue mold fungus)).